The primary structure comprises 478 residues: tRNA(Ile)-lysidine synthase (478 aa).

Residue 27 to 32 (SGGSDS) coordinates ATP.

The protein belongs to the tRNA(Ile)-lysidine synthase family.

The protein resides in the cytoplasm. The catalysed reaction is cytidine(34) in tRNA(Ile2) + L-lysine + ATP = lysidine(34) in tRNA(Ile2) + AMP + diphosphate + H(+). Ligates lysine onto the cytidine present at position 34 of the AUA codon-specific tRNA(Ile) that contains the anticodon CAU, in an ATP-dependent manner. Cytidine is converted to lysidine, thus changing the amino acid specificity of the tRNA from methionine to isoleucine. This chain is tRNA(Ile)-lysidine synthase, found in Rickettsia rickettsii (strain Iowa).